A 319-amino-acid chain; its full sequence is MQEIIKCREQLEKAIKDGEFDKALECLKNAKNFKITKDLLKSTDIGKSVGKLRAHKDIGISSQSKELIDKWKQDIEGTSATTTSSSSSSSSSTTSTTTTKTASPSESLKRKSISEDTSDRPTSKPLLQENKKISPPTTPKTSSPPIASLIAPITGANADLRNKTIQLFVEALTTDNDETMSPPEDIAVEIEAEMYDIYRGVSKEYKEKLRSFKFNLKKNDILRLSLLNRQISVAKFCSMDIYSMASDDLKEERKKLDKFNTEASMLGQNNEATTDQFQCGKCKQRKCTYTQLQTRSADEPPTTFVKCCVKGCGNRWRFC.

Positions 1-78 (MQEIIKCREQ…DKWKQDIEGT (78 aa)) constitute a TFIIS N-terminal domain. A compositionally biased stretch (low complexity) spans 78 to 106 (TSATTTSSSSSSSSSTTSTTTTKTASPSE). The segment at 78-146 (TSATTTSSSS…TTPKTSSPPI (69 aa)) is disordered. Basic and acidic residues predominate over residues 107 to 122 (SLKRKSISEDTSDRPT). Low complexity predominate over residues 133–146 (ISPPTTPKTSSPPI). Residues 160-272 (LRNKTIQLFV…ASMLGQNNEA (113 aa)) enclose the TFIIS central domain. The segment at 275–317 (DQFQCGKCKQRKCTYTQLQTRSADEPPTTFVKCCVKGCGNRWR) adopts a TFIIS-type zinc-finger fold. Zn(2+) is bound by residues C279, C282, C307, and C312.

The protein belongs to the TFS-II family.

It localises to the nucleus. Functionally, necessary for efficient RNA polymerase II transcription elongation past template-encoded arresting sites. The arresting sites in DNA have the property of trapping a certain fraction of elongating RNA polymerases that pass through, resulting in locked ternary complexes. Cleavage of the nascent transcript by S-II allows the resumption of elongation from the new 3'-terminus. This is Transcription elongation factor A protein 1 (tcea1) from Dictyostelium discoideum (Social amoeba).